A 190-amino-acid polypeptide reads, in one-letter code: Hypoxanthine/guanine phosphoribosyltransferase (190 aa).

The protein belongs to the purine/pyrimidine phosphoribosyltransferase family. Archaeal HPRT subfamily. As to quaternary structure, homodimer.

Its subcellular location is the cytoplasm. The enzyme catalyses IMP + diphosphate = hypoxanthine + 5-phospho-alpha-D-ribose 1-diphosphate. It carries out the reaction GMP + diphosphate = guanine + 5-phospho-alpha-D-ribose 1-diphosphate. It participates in purine metabolism; IMP biosynthesis via salvage pathway; IMP from hypoxanthine: step 1/1. Its function is as follows. Catalyzes a salvage reaction resulting in the formation of IMP that is energically less costly than de novo synthesis. This Methanobacterium paludis (strain DSM 25820 / JCM 18151 / SWAN1) protein is Hypoxanthine/guanine phosphoribosyltransferase.